The chain runs to 515 residues: Meiotically up-regulated gene 68 protein (515 aa).

The disordered stretch occupies residues 165-204; it reads LHSIESERNESSLSLDSGESEKKSEEDNGNGEQNYIPEQY.

Its function is as follows. Has a role in meiosis. This Schizosaccharomyces pombe (strain 972 / ATCC 24843) (Fission yeast) protein is Meiotically up-regulated gene 68 protein (mug68).